Consider the following 409-residue polypeptide: DNA primase DnaG (409 aa).

A Toprim domain is found at 175–261; sequence DAIIVVEGRA…EVEELTRKEI (87 aa). Residues Glu181, Asp223, and Asp225 each coordinate Mg(2+). The span at 280–289 shows a compositional bias: basic and acidic residues; the sequence is ERPKDKEREK. The interval 280-322 is disordered; sequence ERPKDKEREKGKKPKPKKRPERRGRPRKKKARPKRGPQERRLL. A compositionally biased stretch (basic residues) spans 290-314; sequence GKKPKPKKRPERRGRPRKKKARPKR.

The protein belongs to the archaeal DnaG primase family. Forms a ternary complex with MCM helicase and DNA. Component of the archaeal exosome complex. Mg(2+) is required as a cofactor.

The enzyme catalyses ssDNA + n NTP = ssDNA/pppN(pN)n-1 hybrid + (n-1) diphosphate.. In terms of biological role, RNA polymerase that catalyzes the synthesis of short RNA molecules used as primers for DNA polymerase during DNA replication. Also part of the exosome, which is a complex involved in RNA degradation. Acts as a poly(A)-binding protein that enhances the interaction between heteromeric, adenine-rich transcripts and the exosome. The chain is DNA primase DnaG from Methanopyrus kandleri (strain AV19 / DSM 6324 / JCM 9639 / NBRC 100938).